The chain runs to 220 residues: MASGGDPKWQKDAADQNFDYMFKLLIIGNSSVGKTSFLFRYADDSFTSAFVSTVGIDFKVKTVFRHDKRVKLQIWDTAGQERYRTITTAYYRGAMGFILMYDVTNEDSFNSVQDWVTQIKTYSWDNAQVILVGNKCDMEDQRVISFERGRQLADQLGVEFFETSAKENVNVKAVFERLVDIICDKMSESLDADPTLVGGGQKGQRLTDQPQGTPNANCNC.

GTP contacts are provided by S30, G33, K34, T35, S36, T47, S48, S52, T53, G79, N134, D137, A165, and K166. T35 provides a ligand contact to Mg(2+). An Effector region motif is present at residues 50–58; it reads FVSTVGIDF. Mg(2+) is bound at residue T53. The interval 194–220 is disordered; it reads PTLVGGGQKGQRLTDQPQGTPNANCNC. A compositionally biased stretch (polar residues) spans 204–220; the sequence is QRLTDQPQGTPNANCNC. 2 S-geranylgeranyl cysteine lipidation sites follow: C218 and C220. At C220 the chain carries Cysteine methyl ester.

Belongs to the small GTPase superfamily. Rab family. As to quaternary structure, interacts with Rph.

It is found in the cytoplasmic vesicle. The protein localises to the secretory vesicle. It localises to the synaptic vesicle. Its function is as follows. Involved in exocytosis by regulating a late step in synaptic vesicle fusion. Could play a role in neurotransmitter release by regulating membrane flow in the nerve terminal. The sequence is that of Ras-related protein Rab-3 (Rab3) from Drosophila melanogaster (Fruit fly).